The sequence spans 111 residues: MEPSMIVVTTENVTGYRTVRMLGQCFGVVVRSRGIGGNFIASLRSIVGGEIHEYTQMLEEARRHALDRLVHNATSMGANAIVMMRFDSAEIGQTMSEIVAYGTAAVIEPAR.

Belongs to the UPF0145 family.

The protein is UPF0145 protein BRADO6695 of Bradyrhizobium sp. (strain ORS 278).